Reading from the N-terminus, the 429-residue chain is 3-phosphoshikimate 1-carboxyvinyltransferase (429 aa).

3-phosphoshikimate is bound by residues Lys-23, Ser-24, and Arg-28. Phosphoenolpyruvate is bound at residue Lys-23. Phosphoenolpyruvate is bound by residues Gly-97 and Arg-125. Positions 170, 171, 172, 198, 314, 338, and 342 each coordinate 3-phosphoshikimate. Phosphoenolpyruvate is bound at residue Gln-172. Asp-314 acts as the Proton acceptor in catalysis. 3 residues coordinate phosphoenolpyruvate: Arg-346, Arg-388, and Lys-413.

It belongs to the EPSP synthase family. As to quaternary structure, monomer.

Its subcellular location is the cytoplasm. It catalyses the reaction 3-phosphoshikimate + phosphoenolpyruvate = 5-O-(1-carboxyvinyl)-3-phosphoshikimate + phosphate. It functions in the pathway metabolic intermediate biosynthesis; chorismate biosynthesis; chorismate from D-erythrose 4-phosphate and phosphoenolpyruvate: step 6/7. Catalyzes the transfer of the enolpyruvyl moiety of phosphoenolpyruvate (PEP) to the 5-hydroxyl of shikimate-3-phosphate (S3P) to produce enolpyruvyl shikimate-3-phosphate and inorganic phosphate. This is 3-phosphoshikimate 1-carboxyvinyltransferase from Pectobacterium carotovorum subsp. carotovorum (strain PC1).